The primary structure comprises 394 residues: Elongation factor Tu (394 aa).

Residues 10 to 205 (KPHVNIGTIG…VDTWIPLPPR (196 aa)) enclose the tr-type G domain. Residues 19-26 (GHVDHGKT) form a G1 region. GTP is bound at residue 19–26 (GHVDHGKT). Mg(2+) is bound at residue T26. The tract at residues 60–64 (GITIN) is G2. Positions 81–84 (DCPG) are G3. Residues 81 to 85 (DCPGH) and 136 to 139 (NKCD) each bind GTP. Positions 136-139 (NKCD) are G4. Residues 174–176 (SAL) form a G5 region.

Belongs to the TRAFAC class translation factor GTPase superfamily. Classic translation factor GTPase family. EF-Tu/EF-1A subfamily. In terms of assembly, monomer.

It localises to the cytoplasm. It catalyses the reaction GTP + H2O = GDP + phosphate + H(+). In terms of biological role, GTP hydrolase that promotes the GTP-dependent binding of aminoacyl-tRNA to the A-site of ribosomes during protein biosynthesis. The protein is Elongation factor Tu of Phocaeicola vulgatus (strain ATCC 8482 / DSM 1447 / JCM 5826 / CCUG 4940 / NBRC 14291 / NCTC 11154) (Bacteroides vulgatus).